The following is a 315-amino-acid chain: Protein-L-isoaspartate O-methyltransferase (315 aa).

Disordered stretches follow at residues 1-47 (MSGE…KPAA) and 59-89 (RALP…AAPK). Positions 14–34 (EDLKRAPRKSEVRSGSGERHA) are enriched in basic and acidic residues. Composition is skewed to low complexity over residues 35–47 (ASAV…KPAA) and 59–81 (RALP…LKPA). The active site involves serine 162.

This sequence belongs to the methyltransferase superfamily. L-isoaspartyl/D-aspartyl protein methyltransferase family.

It localises to the cytoplasm. It carries out the reaction [protein]-L-isoaspartate + S-adenosyl-L-methionine = [protein]-L-isoaspartate alpha-methyl ester + S-adenosyl-L-homocysteine. In terms of biological role, catalyzes the methyl esterification of L-isoaspartyl residues in peptides and proteins that result from spontaneous decomposition of normal L-aspartyl and L-asparaginyl residues. It plays a role in the repair and/or degradation of damaged proteins. The polypeptide is Protein-L-isoaspartate O-methyltransferase (Burkholderia ambifaria (strain MC40-6)).